The sequence spans 300 residues: UPF0761 membrane protein Patl_3954 (300 aa).

A run of 6 helical transmembrane segments spans residues 46–66, 103–123, 138–158, 184–204, 214–234, and 248–268; these read LLSL…FPAF, MGAI…SNID, IIFT…LIGL, MLKI…YMIV, ALVG…GFSF, and AMAV…VVLL.

Belongs to the UPF0761 family.

Its subcellular location is the cell inner membrane. The sequence is that of UPF0761 membrane protein Patl_3954 from Pseudoalteromonas atlantica (strain T6c / ATCC BAA-1087).